Here is a 152-residue protein sequence, read N- to C-terminus: Endoribonuclease YbeY (152 aa).

Residues histidine 118, histidine 122, and histidine 128 each contribute to the Zn(2+) site.

It belongs to the endoribonuclease YbeY family. Zn(2+) serves as cofactor.

The protein resides in the cytoplasm. Single strand-specific metallo-endoribonuclease involved in late-stage 70S ribosome quality control and in maturation of the 3' terminus of the 16S rRNA. The polypeptide is Endoribonuclease YbeY (Lacticaseibacillus paracasei (strain ATCC 334 / BCRC 17002 / CCUG 31169 / CIP 107868 / KCTC 3260 / NRRL B-441) (Lactobacillus paracasei)).